The primary structure comprises 444 residues: MSHPLRSLPKIDKILQESRFADHSKELLTTLARDYLEEIRAQFLQDATPIPPSESILQEVERRYEASLAPSLVPLVNATGIIVHTNLGRSVFAPELIEEIKPLLTSYNNLEYDLKAGRRGERYSHLHGILKAILGCEEVLVVNNNAAAVFLILHTFAQNQEAIISRGELIEIGGSFRIPEVMKNAGAILKEVGTTNKTHRRDYEEAITPQSALLMKVHKSNYDIVGFTQEVDLQELIELSQKHNLIDYYDLGSGFLESVPFTNEPTLKKIASLSPSLVSFSGDKLLGGAQAGIIFGKKSLIDRLKKNQLLRMLRVDKFTLAALEATLRAHLLHDYEKIPTLKMAHLSLEELEERAKKLKSRVHGYESQILQTQGYAGGGALPNQSFFSIALALCHPQKSPMELEQSLRARGVIARIEQERVLLDMRTIFTSQLESLAQILNEVF.

Residue K284 is modified to N6-(pyridoxal phosphate)lysine.

This sequence belongs to the SelA family. The cofactor is pyridoxal 5'-phosphate.

It is found in the cytoplasm. The catalysed reaction is L-seryl-tRNA(Sec) + selenophosphate + H(+) = L-selenocysteinyl-tRNA(Sec) + phosphate. It participates in aminoacyl-tRNA biosynthesis; selenocysteinyl-tRNA(Sec) biosynthesis; selenocysteinyl-tRNA(Sec) from L-seryl-tRNA(Sec) (bacterial route): step 1/1. In terms of biological role, converts seryl-tRNA(Sec) to selenocysteinyl-tRNA(Sec) required for selenoprotein biosynthesis. In Wolinella succinogenes (strain ATCC 29543 / DSM 1740 / CCUG 13145 / JCM 31913 / LMG 7466 / NCTC 11488 / FDC 602W) (Vibrio succinogenes), this protein is L-seryl-tRNA(Sec) selenium transferase.